Consider the following 153-residue polypeptide: MKTKSNLIIISIFLIDFFTKKWILNNYEIFDSIKIFPMIKITYIRNYGIALGLFQSYSNLIRILIIVISIFILLFIFYMKNLCKDLLSNLGYSIIIGGSFGNIFDRIFYGSVIDFIDIYIYKWHFPVFNFADISIFIGFLILIYNKKIFIVNT.

3 consecutive transmembrane segments (helical) span residues leucine 7–tyrosine 27, asparagine 59–methionine 79, and serine 93–isoleucine 113. Catalysis depends on residues aspartate 114 and aspartate 132. The helical transmembrane segment at tryptophan 123 to isoleucine 143 threads the bilayer.

It belongs to the peptidase A8 family.

Its subcellular location is the cell membrane. It catalyses the reaction Release of signal peptides from bacterial membrane prolipoproteins. Hydrolyzes -Xaa-Yaa-Zaa-|-(S,diacylglyceryl)Cys-, in which Xaa is hydrophobic (preferably Leu), and Yaa (Ala or Ser) and Zaa (Gly or Ala) have small, neutral side chains.. It functions in the pathway protein modification; lipoprotein biosynthesis (signal peptide cleavage). This protein specifically catalyzes the removal of signal peptides from prolipoproteins. This Wigglesworthia glossinidia brevipalpis protein is Lipoprotein signal peptidase.